The sequence spans 374 residues: Heat stress transcription factor A-8 (374 aa).

The DNA-binding element occupies 17 to 112 (VAPFLRKCYD…LLKNVIRRKN (96 aa)). A hydrophobic repeat HR-A/B region spans residues 126-192 (TTYAQEKSGL…EMLSFLVMVM (67 aa)). Positions 285–294 (DGAWEKLLLL) match the AHA1 motif. Positions 298-303 (RKKTKK) match the Nuclear localization signal motif. Positions 330 to 339 (KSYMLKLISE) match the AHA2 motif. Positions 363–370 (LTEQMELL) match the Nuclear export signal motif.

The protein belongs to the HSF family. Class A subfamily. In terms of assembly, homotrimer. Post-translationally, exhibits temperature-dependent phosphorylation.

The protein localises to the cytoplasm. It is found in the nucleus. Functionally, transcriptional activator that specifically binds DNA sequence 5'-AGAAnnTTCT-3' known as heat shock promoter elements (HSE). The protein is Heat stress transcription factor A-8 (HSFA8) of Arabidopsis thaliana (Mouse-ear cress).